Reading from the N-terminus, the 1526-residue chain is High affinity cGMP-specific 3',5'-cyclic phosphodiesterase 9A (1526 aa).

A compositionally biased stretch (low complexity) spans 1 to 43 (MYQDSGCSSSSSRRGSSSAAAATSTAATAAETAAAAAATTTSS). 3 disordered regions span residues 1 to 48 (MYQD…DEET), 266 to 348 (SSRS…SGTA), and 393 to 476 (RHHH…ASDC). Basic and acidic residues-rich tracts occupy residues 270–282 (RSSE…HEQD) and 305–314 (EHPSEKPERT). Composition is skewed to low complexity over residues 324-348 (IAVT…SGTA) and 401-440 (QQHQ…ATAT). Polar residues predominate over residues 441–462 (PSVEQPATSGTTNIHLQPTSLP). The PDEase domain maps to 664–985 (VKRRFLEICD…EYYRRLNDAQ (322 aa)). His740 serves as the catalytic Proton donor. A 3',5'-cyclic GMP-binding site is contributed by 740 to 744 (HNFRH). Zn(2+)-binding residues include His744, His780, Asp781, and Asp890. Positions 781 and 890 each coordinate 3',5'-cyclic GMP. Mg(2+) is bound at residue Asp781. Disordered stretches follow at residues 986–1170 (TKTR…SSGG), 1265–1284 (TEAD…KKIP), 1314–1351 (SNGS…GSSW), 1372–1406 (RFGS…DGLG), and 1469–1496 (RYSS…LTTG). Over residues 993-1005 (ADSNTSATSDSNS) the composition is skewed to low complexity. Residues 1033-1057 (NSQGSGGGGGGGGGGGAGGGTGSGC) are compositionally biased toward gly residues. Positions 1065–1093 (VSPQMPRSGSGISVKSRRSIPSQKSASRT) are enriched in polar residues. The span at 1125 to 1136 (VAEKTSKFKVDT) shows a compositional bias: basic and acidic residues. Residues 1139 to 1148 (SSNRSKSSHS) are compositionally biased toward low complexity. Over residues 1314-1324 (SNGSTRSSASS) the composition is skewed to low complexity. Over residues 1325 to 1340 (GRGGSGVPGGSGGSGM) the composition is skewed to gly residues. 2 stretches are compositionally biased toward low complexity: residues 1341 to 1350 (PGPSAGSGSS) and 1375 to 1397 (STRS…NANG). Over residues 1470-1486 (YSSNDSSRHPSNNTLQS) the composition is skewed to polar residues.

It belongs to the cyclic nucleotide phosphodiesterase family. PDE9 subfamily. The cofactor is Zn(2+). It depends on Mg(2+) as a cofactor. Expressed in Malpighian tubules and adult fly head.

The catalysed reaction is 3',5'-cyclic GMP + H2O = GMP + H(+). Its pathway is purine metabolism; 3',5'-cyclic GMP degradation; GMP from 3',5'-cyclic GMP: step 1/1. Functionally, specifically hydrolyzes the second messenger cGMP, which is a key regulator of many important physiological processes. Highly specific: compared to other members of the cyclic nucleotide phosphodiesterase family, has the highest affinity and selectivity for cGMP. This chain is High affinity cGMP-specific 3',5'-cyclic phosphodiesterase 9A, found in Drosophila melanogaster (Fruit fly).